A 353-amino-acid chain; its full sequence is Photosystem II D2 protein (353 aa).

At threonine 2 the chain carries N-acetylthreonine. Threonine 2 carries the post-translational modification Phosphothreonine. A helical transmembrane segment spans residues 41–61; sequence CAYFALGGWFTGTTFVTSWYT. Histidine 118 contacts chlorophyll a. A helical membrane pass occupies residues 125 to 141; it reads GFMLRQFELARSVQLRP. Residues glutamine 130 and asparagine 143 each contribute to the pheophytin a site. The helical transmembrane segment at 153-166 threads the bilayer; that stretch reads VFVSVSLIYPLGQA. Position 198 (histidine 198) interacts with chlorophyll a. A helical transmembrane segment spans residues 208–228; it reads AALLCAIHGATVENTLFEDGD. A plastoquinone-binding residues include histidine 215 and phenylalanine 262. Histidine 215 serves as a coordination point for Fe cation. Histidine 269 is a Fe cation binding site. The helical transmembrane segment at 279-295 threads the bilayer; it reads GLWMSAIGVVGLALNLR.

This sequence belongs to the reaction center PufL/M/PsbA/D family. As to quaternary structure, PSII is composed of 1 copy each of membrane proteins PsbA, PsbB, PsbC, PsbD, PsbE, PsbF, PsbH, PsbI, PsbJ, PsbK, PsbL, PsbM, PsbT, PsbX, PsbY, PsbZ, Psb30/Ycf12, at least 3 peripheral proteins of the oxygen-evolving complex and a large number of cofactors. It forms dimeric complexes. The cofactor is The D1/D2 heterodimer binds P680, chlorophylls that are the primary electron donor of PSII, and subsequent electron acceptors. It shares a non-heme iron and each subunit binds pheophytin, quinone, additional chlorophylls, carotenoids and lipids. There is also a Cl(-1) ion associated with D1 and D2, which is required for oxygen evolution. The PSII complex binds additional chlorophylls, carotenoids and specific lipids..

It is found in the plastid. It localises to the chloroplast thylakoid membrane. It catalyses the reaction 2 a plastoquinone + 4 hnu + 2 H2O = 2 a plastoquinol + O2. Photosystem II (PSII) is a light-driven water:plastoquinone oxidoreductase that uses light energy to abstract electrons from H(2)O, generating O(2) and a proton gradient subsequently used for ATP formation. It consists of a core antenna complex that captures photons, and an electron transfer chain that converts photonic excitation into a charge separation. The D1/D2 (PsbA/PsbD) reaction center heterodimer binds P680, the primary electron donor of PSII as well as several subsequent electron acceptors. D2 is needed for assembly of a stable PSII complex. The protein is Photosystem II D2 protein of Angiopteris evecta (Mule's foot fern).